The following is a 37-amino-acid chain: Large ribosomal subunit protein bL36 (37 aa).

This sequence belongs to the bacterial ribosomal protein bL36 family.

This Paracidovorax citrulli (strain AAC00-1) (Acidovorax citrulli) protein is Large ribosomal subunit protein bL36.